The following is a 102-amino-acid chain: Auxin-responsive protein SAUR68 (102 aa).

This sequence belongs to the ARG7 family.

The protein localises to the cell membrane. Its function is as follows. May promote auxin-stimulated organ elongation, such as hypocotyls, stamen filaments and petals. In Arabidopsis thaliana (Mouse-ear cress), this protein is Auxin-responsive protein SAUR68.